The primary structure comprises 215 residues: MKTVLLTGFDPFGGEKINPAWEVAKALHEKEGNGYKVISKQIPTVFHKSIEQLESYIDEFNPELIICIGQAGGRADITVERVAINVDDARIPDNENYQPIDVPIIEDGPVAYWSTLPIKAIVKKLREEGIPASVSQTAGTFVCNHLFYGLMHRLAIKNKSTRGGFVHIPFLPEQASLHANQPSMSLSTIIAGIQLLIEVALQVEKDIVECGGTTH.

Catalysis depends on residues glutamate 80, cysteine 143, and histidine 167.

Belongs to the peptidase C15 family. Homotetramer.

It localises to the cytoplasm. It carries out the reaction Release of an N-terminal pyroglutamyl group from a polypeptide, the second amino acid generally not being Pro.. In terms of biological role, removes 5-oxoproline from various penultimate amino acid residues except L-proline. The sequence is that of Pyrrolidone-carboxylate peptidase from Bacillus cytotoxicus (strain DSM 22905 / CIP 110041 / 391-98 / NVH 391-98).